The chain runs to 480 residues: Glutamate--tRNA ligase (480 aa).

The 'HIGH' region signature appears at 9 to 19; sequence PSPTGNLHIGT. The short motif at 250-254 is the 'KMSKS' region element; sequence KLSKR. Lysine 253 is an ATP binding site.

The protein belongs to the class-I aminoacyl-tRNA synthetase family. Glutamate--tRNA ligase type 1 subfamily. As to quaternary structure, monomer.

It localises to the cytoplasm. It catalyses the reaction tRNA(Glu) + L-glutamate + ATP = L-glutamyl-tRNA(Glu) + AMP + diphosphate. Functionally, catalyzes the attachment of glutamate to tRNA(Glu) in a two-step reaction: glutamate is first activated by ATP to form Glu-AMP and then transferred to the acceptor end of tRNA(Glu). This chain is Glutamate--tRNA ligase, found in Microcystis aeruginosa (strain NIES-843 / IAM M-2473).